Consider the following 338-residue polypeptide: MLGINYKPCNEDFWQGRTDSEENFLAFRWHQWIKPINLNKDDLSPFTGKLGFAFIGFCCDEGIRRNKGRTGAAKGPETIREEMANLPCCFTDEVKLFDAGNILVENISLEEGQDLLSKAINKILSLNLFPIVLGGGHEVAFGNYLGVLSHLKTINSKPNIGIINFDAHLDIRPYTEGMGSSGTMFRQISDICKKEDLNYSYLCMGVQKHSNTLELFKTADKLGANYVFAKNITYGDNWIVFESLDDFMKAQDYIYVTVCSDVFSSAFAPGVSASQSLGLDPEIVVRFIKYILRSNKVISFDIAEVSPRFDQGHVTANLAAVVIFSVIDTIAKIYGLGL.

The Mn(2+) site is built by histidine 137, aspartate 166, histidine 168, aspartate 170, cysteine 259, and aspartate 261.

The protein belongs to the arginase family. Requires Mn(2+) as cofactor.

It carries out the reaction N-formimidoyl-L-glutamate + H2O = formamide + L-glutamate. It functions in the pathway amino-acid degradation; L-histidine degradation into L-glutamate; L-glutamate from N-formimidoyl-L-glutamate (hydrolase route): step 1/1. In terms of biological role, catalyzes the conversion of N-formimidoyl-L-glutamate to L-glutamate and formamide. The polypeptide is Formimidoylglutamase (Clostridium tetani (strain Massachusetts / E88)).